Reading from the N-terminus, the 454-residue chain is Bifunctional protein GlmU (454 aa).

Residues 1-225 (MNIVILAAGM…VWETLGVNSK (225 aa)) are pyrophosphorylase. UDP-N-acetyl-alpha-D-glucosamine-binding positions include 6 to 9 (LAAG), Lys20, Gln71, 76 to 77 (GT), 98 to 100 (YGD), Gly135, Glu150, Asn165, and Asn223. Mg(2+) is bound at residue Asp100. Asn223 is a Mg(2+) binding site. The tract at residues 226 to 246 (LQLAEVERIHQGNQARRLLEA) is linker. The tract at residues 247 to 454 (GVTLLDPARI…WQRPVKQPKQ (208 aa)) is N-acetyltransferase. UDP-N-acetyl-alpha-D-glucosamine-binding residues include Arg329 and Lys347. Catalysis depends on His359, which acts as the Proton acceptor. UDP-N-acetyl-alpha-D-glucosamine is bound by residues Tyr362 and Asn373. Acetyl-CoA-binding positions include Ala376, 382 to 383 (NY), Ser401, Ala419, and Arg436.

It in the N-terminal section; belongs to the N-acetylglucosamine-1-phosphate uridyltransferase family. In the C-terminal section; belongs to the transferase hexapeptide repeat family. Homotrimer. Mg(2+) serves as cofactor.

The protein localises to the cytoplasm. It carries out the reaction alpha-D-glucosamine 1-phosphate + acetyl-CoA = N-acetyl-alpha-D-glucosamine 1-phosphate + CoA + H(+). The catalysed reaction is N-acetyl-alpha-D-glucosamine 1-phosphate + UTP + H(+) = UDP-N-acetyl-alpha-D-glucosamine + diphosphate. The protein operates within nucleotide-sugar biosynthesis; UDP-N-acetyl-alpha-D-glucosamine biosynthesis; N-acetyl-alpha-D-glucosamine 1-phosphate from alpha-D-glucosamine 6-phosphate (route II): step 2/2. It participates in nucleotide-sugar biosynthesis; UDP-N-acetyl-alpha-D-glucosamine biosynthesis; UDP-N-acetyl-alpha-D-glucosamine from N-acetyl-alpha-D-glucosamine 1-phosphate: step 1/1. Its pathway is bacterial outer membrane biogenesis; LPS lipid A biosynthesis. In terms of biological role, catalyzes the last two sequential reactions in the de novo biosynthetic pathway for UDP-N-acetylglucosamine (UDP-GlcNAc). The C-terminal domain catalyzes the transfer of acetyl group from acetyl coenzyme A to glucosamine-1-phosphate (GlcN-1-P) to produce N-acetylglucosamine-1-phosphate (GlcNAc-1-P), which is converted into UDP-GlcNAc by the transfer of uridine 5-monophosphate (from uridine 5-triphosphate), a reaction catalyzed by the N-terminal domain. The protein is Bifunctional protein GlmU of Cupriavidus taiwanensis (strain DSM 17343 / BCRC 17206 / CCUG 44338 / CIP 107171 / LMG 19424 / R1) (Ralstonia taiwanensis (strain LMG 19424)).